The primary structure comprises 678 residues: Endopolyphosphatase (678 aa).

Topologically, residues 1 to 2 (MR) are cytoplasmic. The chain crosses the membrane as a helical; Signal-anchor for type II membrane protein span at residues 3–23 (SPLLASLFALALSIASSEAAI). Residues 24–678 (SSTEQVPLSG…ELMLVSTETD (655 aa)) are Vacuolar-facing. Positions 70–109 (YKTGSTFDSGCHRKPKKDGKSEGKKATENERGNEDLDDKE) are disordered. The segment covering 87–103 (DGKSEGKKATENERGNE) has biased composition (basic and acidic residues). N-linked (GlcNAc...) asparagine glycans are attached at residues N138, N369, and N447. Positions 504–547 (KGSGGHRHDVPKGDCSLPSNEDKPHCTFKRKPRHYSKRSPSRTN) are disordered. Positions 529-543 (CTFKRKPRHYSKRSP) are enriched in basic residues. Residues N591 and N616 are each glycosylated (N-linked (GlcNAc...) asparagine).

This sequence belongs to the endopolyphosphatase PPN1 family. Requires a divalent metal cation as cofactor. Post-translationally, processing by proteases in the vacuole may be required for activation.

The protein localises to the vacuole membrane. It carries out the reaction [phosphate](n+1) + n H2O = (n+1) phosphate + n H(+). Catalyzes the hydrolysis of inorganic polyphosphate (polyP) chains of many hundreds of phosphate residues into shorter lengths. The protein is Endopolyphosphatase (PPN1) of Cryptococcus neoformans var. neoformans serotype D (strain JEC21 / ATCC MYA-565) (Filobasidiella neoformans).